Reading from the N-terminus, the 316-residue chain is Pantothenate kinase (316 aa).

An ATP-binding site is contributed by 95–102; sequence GSVAVGKS.

This sequence belongs to the prokaryotic pantothenate kinase family.

It localises to the cytoplasm. The enzyme catalyses (R)-pantothenate + ATP = (R)-4'-phosphopantothenate + ADP + H(+). It participates in cofactor biosynthesis; coenzyme A biosynthesis; CoA from (R)-pantothenate: step 1/5. This is Pantothenate kinase from Salmonella choleraesuis (strain SC-B67).